The sequence spans 431 residues: tRNA(Ile)-lysidine synthase (431 aa).

ATP is bound at residue 19–24 (STGIDS).

It belongs to the tRNA(Ile)-lysidine synthase family.

Its subcellular location is the cytoplasm. It carries out the reaction cytidine(34) in tRNA(Ile2) + L-lysine + ATP = lysidine(34) in tRNA(Ile2) + AMP + diphosphate + H(+). In terms of biological role, ligates lysine onto the cytidine present at position 34 of the AUA codon-specific tRNA(Ile) that contains the anticodon CAU, in an ATP-dependent manner. Cytidine is converted to lysidine, thus changing the amino acid specificity of the tRNA from methionine to isoleucine. This is tRNA(Ile)-lysidine synthase from Staphylococcus aureus (strain MRSA252).